The primary structure comprises 732 residues: Non-structural protein 4 (732 aa).

Polar residues-rich tracts occupy residues lysine 13–histidine 23 and leucine 31–serine 56. Disordered regions lie at residues lysine 13 to alanine 74 and leucine 706 to glutamate 732. Over residues glutamine 719 to glutamate 732 the composition is skewed to acidic residues.

The chain is Non-structural protein 4 from Catharanthus roseus (Madagascar periwinkle).